Here is a 263-residue protein sequence, read N- to C-terminus: Cobalt-precorrin-6A reductase (263 aa).

It belongs to the precorrin-6x reductase family.

The enzyme catalyses Co-precorrin-6B + NAD(+) = Co-precorrin-6A + NADH + H(+). The protein operates within cofactor biosynthesis; adenosylcobalamin biosynthesis; cob(II)yrinate a,c-diamide from sirohydrochlorin (anaerobic route): step 7/10. Catalyzes the reduction of the macrocycle of cobalt-precorrin-6A to cobalt-precorrin-6B. The polypeptide is Cobalt-precorrin-6A reductase (cbiJ) (Salmonella typhimurium (strain LT2 / SGSC1412 / ATCC 700720)).